A 290-amino-acid polypeptide reads, in one-letter code: Nucleoid occlusion protein (290 aa).

A DNA-binding region (H-T-H motif) is located at residues 153 to 172; sequence EALAQRLGKGQSTIANKLRL.

The protein belongs to the ParB family.

It is found in the cytoplasm. It localises to the nucleoid. Functionally, effects nucleoid occlusion by binding relatively nonspecifically to DNA and preventing the assembly of the division machinery in the vicinity of the nucleoid, especially under conditions that disturb the cell cycle. It helps to coordinate cell division and chromosome segregation by preventing the formation of the Z ring through the nucleoid, which would cause chromosome breakage. In Bacillus cereus (strain G9842), this protein is Nucleoid occlusion protein.